The following is a 307-amino-acid chain: Ribosomal RNA small subunit methyltransferase H (307 aa).

Residues 33-35, D52, L83, D97, and Q104 contribute to the S-adenosyl-L-methionine site; that span reads GGH.

The protein belongs to the methyltransferase superfamily. RsmH family.

The protein localises to the cytoplasm. It carries out the reaction cytidine(1402) in 16S rRNA + S-adenosyl-L-methionine = N(4)-methylcytidine(1402) in 16S rRNA + S-adenosyl-L-homocysteine + H(+). In terms of biological role, specifically methylates the N4 position of cytidine in position 1402 (C1402) of 16S rRNA. This is Ribosomal RNA small subunit methyltransferase H from Campylobacter fetus subsp. fetus (strain 82-40).